A 378-amino-acid polypeptide reads, in one-letter code: Deoxyguanosinetriphosphate triphosphohydrolase-like protein (378 aa).

Positions 1 to 28 are disordered; the sequence is MLAPYACQPGESRGRQQPESMSTFRSPF. Over residues 15–26 the composition is skewed to polar residues; it reads RQQPESMSTFRS. Positions 62-198 constitute an HD domain; it reads RLTHSIEVAQ…AAIADDVAYS (137 aa).

The protein belongs to the dGTPase family. Type 2 subfamily.

This Cereibacter sphaeroides (strain ATCC 17025 / ATH 2.4.3) (Rhodobacter sphaeroides) protein is Deoxyguanosinetriphosphate triphosphohydrolase-like protein.